Consider the following 2273-residue polypeptide: KGKTITHGQSWGARRIHSHFYITIFTITCIRIGQYKLALYLDPYRFYNITGSQIVRLKGQRPEYRKRIFAHSYRHSSRIGLNFPSRRRYSNYVDRGNIHKHTRLPPQFIGLNTVESAQPSILRDFVDLRGGHTVISKILIANNGIAAVKEMRSIRKWAYETFNDEKIIQFVVMATPDDLHANSEYIRMADQYVQVPGGTNNNNYANIDLILDVAEQTDVDAVWAGWGHASENPCLPELLASSQRKILFIGPPGRAMRSLGDKISSTIVAQSAKIPCIPWSGSHIDTIHIDNKTNFVSVPDDVYVRGCCSSPEDALEKAKLIGFPVMIKASEGGGGKGIRRVDNQDDFIALYRQAVNETPGSPMFVMKVVTDARHLEVQLLADQYGTNITLFGRDCSIQRRHQKIIEEAPVTITKPETFQRMERAAIRLGELVGYVSAGTVEYLYSPKDDKFYFLELNPRLQVEHPTTEMISGVNLPATQLQIAMGIPMHMISDIRKLYGLDPTGTSYIDFKNLKRPSPKGHCISCRITSEDPNEGFKPSTGKIHELNFRSSSNVWGYFSVGNNGAIHSFSDSQFGHIFAVGNDRQDAKQNMVLALKDFSIRGDFKTPIEYLIELLETRDFESNNISTGWLDDLILKNLSSDSKLDPTLAIICGAAMKAYVFTEKVRNKYLELLRRGQVPPKDFLKTKFPVDFIFDNNRYLFNVAQSSEEQFILSINKSQCEVNVQKLSSDCLLISVDGKCHTVYWKDDIRGTRLSIDSNTIFLEAELNPTQVISPTPGKLVKYLVRSGDHVFAGQQYAEMEIMKMQMPLVAKSDGVIELLRQPGSIIEAGDVIAKLTLDSPSKANESSLYRGELPVLGPPLIEGSRPNHKLRVLINRLENILNGYHENSGIETTLKELIKILRDGRLPYSEWDSQISTVRNRLPRQLNEGLGNLVKKSVSFPAKELHKLMKRYLEENTNDHVVYVALQPLLKISERYSEGLANHECEIFLKLIKKYYAVEKIFENHDIHEERNLLNLRRKDLTNLKEILCISLSHANIVAKNKLVTAILHEYEPLCQDSSKMSLKFRAVIHDLASLESKWAKEVSVKARSVLLRGIFPPIKKRKEHIKTLLQLHIKDTGAENIHSRNIYSCMRDFGNLIHSNLIQLQDLFFFFGHQDTALSSIASEIYARYAYGNYQLKSIKIHKGAPDLLMSWQFSSLRNYLVNSDGESDEFTKLSKPPSTSGKSSANSFGLLVNMRALESLEKTLDEVYEQIHIPEERLSSGENSLIVNILSPIRYRSENDLIKTLKIKLHENERGLSKLKVNRITFAFIAANAPAVKFYSFDGTTYDEIPQIRNMDPSYEAPLELGKMSNYKIRSLPTYDSSIRIFEGISKFTPLDKRFFVRKIINSFMYNDQKTTEENLKAEINAQVVYMLEHLGAVDISNSDLNHIFLSFNTVLNIPVHRLEEIVSTILKTHETRLFQERITDVEICISVECLETKKPAPLRLLISNKSGYVVKIETYYEKIGKNGNLILEPCSEQSHYSQKSLSLPYSVKDWLQPKRYKAQFMGTTYVYDFPGLFHQAAIQQWKRYFPKHKLNDSFFSWVELIEQNGNLIKVNREPGLNNIGMVAFEIMVQTPEYPEGRNMIVISNDITYNIGSFGPREDLFFDRVTNYARERGIPRIYLAANSGAKLGIAEELIPLFRVAWNDPSDPTKGFQYLYLAPKDMQLLKDSGKGNSVVVEHKMVYGEERYIIKAIVGFEEGLGVECLQGSGLIAGATSKAYRDIFTITAVTCRSVGIGSYLVRLGQRTIQVEDKPIILTGASAINKVLGTDIYTSNLQIGGTQIMYKNGIAHLTASNDMKAIEKIMTWLSYVPAKRDMSPPLLETMDRWDRDVDFKPAKQVPYEARWLIEGKWDSNNNFQSGLFDKDSFFETLSGWAKGVIVGRARLGGIPVGVIAVETKTIEEIIPADPANLDSSEFSVKEAGQVWYPNSAFKTAQTINDFNYGEQLPLIILANWRGFSGGQRDMYNEVLKYGSFIVDALVDYKQPILIYIPPFGELRGGSWVVIDPTINPEQMEMYADVESRGGVLEPDGVVSIKYRKEKMIETMIRLDSTYGHLRRTLTEKKLSLEKQNDLTKRLKIRERQLIPIYNQISIQFADLHDRSTRMLVKGVIRNELEWKKSRRFLYWRLRRRLNEGQVIKRLQKKTCDNKTKMKYDDLLKIVQSWYNDLDVNDDRAVVEFIERNSKKIDKNIEEFEISLLIDELKKKFEDRRGNIVLEELTRLVDSKRKR.

The N-terminal 104 residues, 1–104, are a transit peptide targeting the mitochondrion; sequence KGKTITHGQS…RGNIHKHTRL (104 aa). The region spanning 134 to 635 is the Biotin carboxylation domain; it reads VISKILIANN…STGWLDDLIL (502 aa). In terms of domain architecture, ATP-grasp spans 292–484; the sequence is KTNFVSVPDD…LPATQLQIAM (193 aa). 332–337 is an ATP binding site; that stretch reads GGGGKG. The active site involves arginine 459. The region spanning 763–837 is the Biotinyl-binding domain; the sequence is LEAELNPTQV…EAGDVIAKLT (75 aa). Lysine 804 is subject to N6-biotinyllysine. Residues 1532–1867 form the CoA carboxyltransferase N-terminal domain; that stretch reads PYSVKDWLQP…KRDMSPPLLE (336 aa). The tract at residues 1532–2187 is carboxyltransferase; sequence PYSVKDWLQP…EGQVIKRLQK (656 aa). 3 residues coordinate CoA: arginine 1776, lysine 2080, and arginine 2082. Residues 1871 to 2187 enclose the CoA carboxyltransferase C-terminal domain; it reads RWDRDVDFKP…EGQVIKRLQK (317 aa).

It depends on biotin as a cofactor.

The protein localises to the mitochondrion. It catalyses the reaction hydrogencarbonate + acetyl-CoA + ATP = malonyl-CoA + ADP + phosphate + H(+). It carries out the reaction N(6)-biotinyl-L-lysyl-[protein] + hydrogencarbonate + ATP = N(6)-carboxybiotinyl-L-lysyl-[protein] + ADP + phosphate + H(+). The protein operates within lipid metabolism; malonyl-CoA biosynthesis; malonyl-CoA from acetyl-CoA: step 1/1. Its function is as follows. Catalyzes the rate-limiting reaction in the mitochondrial fatty acid synthesis (FAS) type II pathway. Responsible for the production of the mitochondrial malonyl-CoA, used for the biosynthesis of the cofactor lipoic acid. This protein carries three functions: biotin carboxyl carrier protein, biotin carboxylase, and carboxyltransferase. This chain is Acetyl-CoA carboxylase, mitochondrial (HFA1), found in Saccharomyces cerevisiae (strain Lalvin EC1118 / Prise de mousse) (Baker's yeast).